Here is a 151-residue protein sequence, read N- to C-terminus: Ubiquitin-conjugating enzyme E2 2 (151 aa).

The UBC core domain occupies 4–150 (AARRRLMRDF…VRETVEKSWE (147 aa)). The active-site Glycyl thioester intermediate is Cys88.

The protein belongs to the ubiquitin-conjugating enzyme family.

It localises to the cytoplasm. It is found in the nucleus. The catalysed reaction is S-ubiquitinyl-[E1 ubiquitin-activating enzyme]-L-cysteine + [E2 ubiquitin-conjugating enzyme]-L-cysteine = [E1 ubiquitin-activating enzyme]-L-cysteine + S-ubiquitinyl-[E2 ubiquitin-conjugating enzyme]-L-cysteine.. It functions in the pathway protein modification; protein ubiquitination. Functionally, catalyzes the covalent attachment of ubiquitin to other proteins. Plays a role in transcription regulation by catalyzing the monoubiquitination of histone H2B to form H2BK123ub1. H2BK123ub1 gives a specific tag for epigenetic transcriptional activation and is also a prerequisite for H3K4me and H3K79me formation. Also involved in postreplication repair of UV-damaged DNA, in N-end rule-dependent protein degradation and in sporulation. The polypeptide is Ubiquitin-conjugating enzyme E2 2 (UBC2) (Fusarium solani (Filamentous fungus)).